The primary structure comprises 363 residues: MTMENKPADKPVGQNGLTYAQAGVDIDAGNLMVEKIKPLVRSTRRPGADGEIGGFGGLFDLKAAGFKDPVLVAANDGVGTKLKIAIDADKHDTVGIDLVAMCVNDLVVQGAEPLFFLDYFATGKLSPDQGVDIVAGIAEGCRQAGSALIGGETAEMPGMYRDGDYDLAGFAVGAAERDRLLPRGDIAEGDVILGLASSGVHSNGFSLVRRIVELSGLGWKSDAPFQPGATLGEALLTPTRIYVKPLLAAIRASDGIKALAHITGGGFPDNIPRVLPEGLAAEIDLESISVPAVFSWLAKTGGVEPNEMLRTFNCGIGMIAVVKPEKVEEVVAALAAEGEKVVTLGQMVKRDKDGVVYKGTLSL.

Belongs to the AIR synthase family.

Its subcellular location is the cytoplasm. It carries out the reaction 2-formamido-N(1)-(5-O-phospho-beta-D-ribosyl)acetamidine + ATP = 5-amino-1-(5-phospho-beta-D-ribosyl)imidazole + ADP + phosphate + H(+). Its pathway is purine metabolism; IMP biosynthesis via de novo pathway; 5-amino-1-(5-phospho-D-ribosyl)imidazole from N(2)-formyl-N(1)-(5-phospho-D-ribosyl)glycinamide: step 2/2. In Brucella anthropi (strain ATCC 49188 / DSM 6882 / CCUG 24695 / JCM 21032 / LMG 3331 / NBRC 15819 / NCTC 12168 / Alc 37) (Ochrobactrum anthropi), this protein is Phosphoribosylformylglycinamidine cyclo-ligase.